Consider the following 205-residue polypeptide: Large ribosomal subunit protein uL4 (205 aa).

Residues 56 to 76 (VSGTTAKPYRQKHTGRARQGS) form a disordered region.

This sequence belongs to the universal ribosomal protein uL4 family. Part of the 50S ribosomal subunit.

Functionally, one of the primary rRNA binding proteins, this protein initially binds near the 5'-end of the 23S rRNA. It is important during the early stages of 50S assembly. It makes multiple contacts with different domains of the 23S rRNA in the assembled 50S subunit and ribosome. Forms part of the polypeptide exit tunnel. The chain is Large ribosomal subunit protein uL4 from Ehrlichia ruminantium (strain Welgevonden).